We begin with the raw amino-acid sequence, 224 residues long: Adenosylcobinamide-GDP ribazoletransferase (224 aa).

The next 4 helical transmembrane spans lie at 21 to 41, 44 to 64, 97 to 117, and 156 to 176; these read LSFK…AAIP, LLYL…ATGL, GGIF…HSPL, and WPAA…TTAV.

Belongs to the CobS family. Mg(2+) is required as a cofactor.

It is found in the cell membrane. It catalyses the reaction alpha-ribazole + adenosylcob(III)inamide-GDP = adenosylcob(III)alamin + GMP + H(+). The catalysed reaction is alpha-ribazole 5'-phosphate + adenosylcob(III)inamide-GDP = adenosylcob(III)alamin 5'-phosphate + GMP + H(+). The protein operates within cofactor biosynthesis; adenosylcobalamin biosynthesis; adenosylcobalamin from cob(II)yrinate a,c-diamide: step 7/7. Joins adenosylcobinamide-GDP and alpha-ribazole to generate adenosylcobalamin (Ado-cobalamin). Also synthesizes adenosylcobalamin 5'-phosphate from adenosylcobinamide-GDP and alpha-ribazole 5'-phosphate. This is Adenosylcobinamide-GDP ribazoletransferase from Pyrobaculum aerophilum (strain ATCC 51768 / DSM 7523 / JCM 9630 / CIP 104966 / NBRC 100827 / IM2).